We begin with the raw amino-acid sequence, 52 residues long: Protein YabQ (52 aa).

In terms of biological role, identified as a multicopy suppressor of the slow growth phenotype of an rsgA (yjeQ) deletion mutant. In Escherichia coli (strain K12), this protein is Protein YabQ (yabQ).